A 238-amino-acid chain; its full sequence is Purine nucleoside phosphorylase DeoD-type (238 aa).

H4 is an a purine D-ribonucleoside binding site. Phosphate is bound by residues G20, R24, R43, and 87-90; that span reads RVGS. A purine D-ribonucleoside is bound by residues 179-181 and 203-204; these read EME and SD. The Proton donor role is filled by D204.

This sequence belongs to the PNP/UDP phosphorylase family. Homohexamer; trimer of homodimers.

The catalysed reaction is a purine D-ribonucleoside + phosphate = a purine nucleobase + alpha-D-ribose 1-phosphate. It catalyses the reaction a purine 2'-deoxy-D-ribonucleoside + phosphate = a purine nucleobase + 2-deoxy-alpha-D-ribose 1-phosphate. Functionally, catalyzes the reversible phosphorolytic breakdown of the N-glycosidic bond in the beta-(deoxy)ribonucleoside molecules, with the formation of the corresponding free purine bases and pentose-1-phosphate. The sequence is that of Purine nucleoside phosphorylase DeoD-type from Histophilus somni (strain 129Pt) (Haemophilus somnus).